The primary structure comprises 729 residues: Transcriptional activator ptaB (729 aa).

Pro residues predominate over residues 1 to 12 (MPQHPGLPPGHP). Disordered stretches follow at residues 1–69 (MPQH…QAHA), 207–341 (AAAA…QNQA), 505–538 (LELS…SLPE), and 614–729 (RGPQ…KGTA). A compositionally biased stretch (low complexity) spans 38–56 (PGGPQVTQGGPMMGMPPGA). The span at 272–285 (APQPHPTPNPPPQQ) shows a compositional bias: pro residues. Composition is skewed to low complexity over residues 286–300 (LPQA…HQQP) and 307–341 (QPQQ…QNQA). Residues 614-625 (RGPQMNGPNQFA) are compositionally biased toward polar residues. The span at 655–671 (GPPGMVQQGQMQPNVGQ) shows a compositional bias: low complexity. Polar residues predominate over residues 672–682 (ATSASASPQVT).

Belongs to the MFG1 family. As to quaternary structure, interacts with somA.

The protein resides in the nucleus. In terms of biological role, transcriptional regulator that forms a complex with somA to control biofilm formation. This chain is Transcriptional activator ptaB, found in Aspergillus fumigatus (strain ATCC MYA-4609 / CBS 101355 / FGSC A1100 / Af293) (Neosartorya fumigata).